We begin with the raw amino-acid sequence, 385 residues long: UPF0764 protein C16orf89 homolog (385 aa).

The N-terminal stretch at 1 to 20 (MARLGLLLLLLLALPPHFSS) is a signal peptide. Residues 344 to 385 (AHPEYYPNHGDPYSSSQSPASNYQDGAAGPDVQRTGRPLSVS) form a disordered region. Polar residues predominate over residues 356–367 (YSSSQSPASNYQ).

The protein belongs to the UPF0764 family. As to quaternary structure, homodimer. In terms of processing, glycosylated. Predominantly expressed in thyroid tissue.

It localises to the secreted. This is UPF0764 protein C16orf89 homolog from Mus musculus (Mouse).